The following is a 238-amino-acid chain: Probable transcriptional regulatory protein YeeN (238 aa).

The protein belongs to the TACO1 family. YeeN subfamily.

The protein resides in the cytoplasm. The sequence is that of Probable transcriptional regulatory protein YeeN from Shigella sonnei (strain Ss046).